The following is a 248-amino-acid chain: Enolase-phosphatase E1 (248 aa).

Residues Asp-14 and Glu-16 each contribute to the Mg(2+) site. Substrate is bound by residues 145–146 (SS) and Lys-179. Asp-204 is a binding site for Mg(2+).

This sequence belongs to the HAD-like hydrolase superfamily. MasA/MtnC family. As to quaternary structure, monomer. It depends on Mg(2+) as a cofactor.

The protein resides in the cytoplasm. It localises to the nucleus. It catalyses the reaction 5-methylsulfanyl-2,3-dioxopentyl phosphate + H2O = 1,2-dihydroxy-5-(methylsulfanyl)pent-1-en-3-one + phosphate. Its pathway is amino-acid biosynthesis; L-methionine biosynthesis via salvage pathway; L-methionine from S-methyl-5-thio-alpha-D-ribose 1-phosphate: step 3/6. The protein operates within amino-acid biosynthesis; L-methionine biosynthesis via salvage pathway; L-methionine from S-methyl-5-thio-alpha-D-ribose 1-phosphate: step 4/6. In terms of biological role, bifunctional enzyme that catalyzes the enolization of 2,3-diketo-5-methylthiopentyl-1-phosphate (DK-MTP-1-P) into the intermediate 2-hydroxy-3-keto-5-methylthiopentenyl-1-phosphate (HK-MTPenyl-1-P), which is then dephosphorylated to form the acireductone 1,2-dihydroxy-3-keto-5-methylthiopentene (DHK-MTPene). The protein is Enolase-phosphatase E1 of Caenorhabditis elegans.